Here is a 98-residue protein sequence, read N- to C-terminus: Protein E7 (98 aa).

The interval 1 to 42 (MHGRHVTLKDIVLDLQPPDPVGLHCYEQLVDSSEDEVDEVDG) is E7 terminal domain. Positions 23–27 (LHCYE) match the LXCXE motif; interaction with host RB1 and TMEM173/STING motif. The segment at 58–94 (CCGCDSNVRLVVQCTETDIREVQQLLLGTLNIVCPIC) is a zinc-finger region. Residues 76 to 84 (IREVQQLLL) carry the Nuclear export signal motif.

This sequence belongs to the papillomaviridae E7 protein family. As to quaternary structure, homodimer. Homooligomer. Interacts with host RB1; this interaction induces dissociation of RB1-E2F1 complex thereby disrupting RB1 activity. Interacts with host EP300; this interaction represses EP300 transcriptional activity. Interacts with protein E2; this interaction inhibits E7 oncogenic activity. Interacts with host TMEM173/STING; this interaction impairs the ability of TMEM173/STING to sense cytosolic DNA and promote the production of type I interferon (IFN-alpha and IFN-beta). In terms of processing, highly phosphorylated.

Its subcellular location is the host cytoplasm. The protein localises to the host nucleus. In terms of biological role, plays a role in viral genome replication by driving entry of quiescent cells into the cell cycle. Stimulation of progression from G1 to S phase allows the virus to efficiently use the cellular DNA replicating machinery to achieve viral genome replication. E7 protein has both transforming and trans-activating activities. Induces the disassembly of the E2F1 transcription factor from RB1, with subsequent transcriptional activation of E2F1-regulated S-phase genes. Interferes with host histone deacetylation mediated by HDAC1 and HDAC2, leading to transcription activation. Also plays a role in the inhibition of both antiviral and antiproliferative functions of host interferon alpha. Interaction with host TMEM173/STING impairs the ability of TMEM173/STING to sense cytosolic DNA and promote the production of type I interferon (IFN-alpha and IFN-beta). The sequence is that of Protein E7 from Human papillomavirus type 6b.